The chain runs to 59 residues: Small, acid-soluble spore protein H 2 (59 aa).

This sequence belongs to the SspH family.

The protein resides in the spore core. The protein is Small, acid-soluble spore protein H 2 (sspH2) of Bacillus cereus (strain ATCC 14579 / DSM 31 / CCUG 7414 / JCM 2152 / NBRC 15305 / NCIMB 9373 / NCTC 2599 / NRRL B-3711).